The primary structure comprises 483 residues: Probable cysteine protease ATG4 (483 aa).

Cysteine 141 serves as the catalytic Nucleophile. Residues aspartate 315 and histidine 317 contribute to the active site.

This sequence belongs to the peptidase C54 family.

It localises to the cytoplasm. The protein resides in the nucleus. The protein localises to the preautophagosomal structure. It catalyses the reaction [protein]-C-terminal L-amino acid-glycyl-phosphatidylethanolamide + H2O = [protein]-C-terminal L-amino acid-glycine + a 1,2-diacyl-sn-glycero-3-phosphoethanolamine. In terms of biological role, cysteine protease that plays a key role in cytoplasm to vacuole transport (Cvt) and autophagy by mediating both proteolytic activation and delipidation of ATG8. Required for selective autophagic degradation of the nucleus (nucleophagy) as well as for mitophagy which contributes to regulate mitochondrial quantity and quality by eliminating the mitochondria to a basal level to fulfill cellular energy requirements and preventing excess ROS production. The protease activity is required for proteolytic activation of ATG8: cleaves the C-terminal amino acid of ATG8 to reveal a C-terminal glycine. ATG8 ubiquitin-like activity requires the exposure of the glycine at the C-terminus for its conjugation to phosphatidylethanolamine (PE) and its insertion to membranes, which is necessary for autophagy. The ATG8-PE conjugate mediates tethering between adjacent membranes and stimulates membrane hemifusion, leading to expansion of the autophagosomal membrane during autophagy. In addition to the protease activity, also catalyzes deconjugation of PE-conjugated forms of ATG8 during macroautophagy: ATG8 delipidation is required to release the protein from membranes, which facilitates multiple events during macroautophagy, and especially for efficient autophagosome biogenesis, the assembly of ATG9-containing tubulovesicular clusters into phagophores/autophagosomes, and for the disassembly of PAS-associated ATG components. ATG8 delipidation by ATG4 also recycles ATG8-PE generated on inappropriate membranes to maintain a reservoir of unlipidated ATG8 that is required for autophagosome formation at the PAS. The sequence is that of Probable cysteine protease ATG4 (ATG4) from Candida glabrata (strain ATCC 2001 / BCRC 20586 / JCM 3761 / NBRC 0622 / NRRL Y-65 / CBS 138) (Yeast).